The following is a 210-amino-acid chain: Urease accessory protein UreF (210 aa).

The protein belongs to the UreF family. UreD, UreF and UreG form a complex that acts as a GTP-hydrolysis-dependent molecular chaperone, activating the urease apoprotein by helping to assemble the nickel containing metallocenter of UreC. The UreE protein probably delivers the nickel.

The protein localises to the cytoplasm. Required for maturation of urease via the functional incorporation of the urease nickel metallocenter. This Cereibacter sphaeroides (strain KD131 / KCTC 12085) (Rhodobacter sphaeroides) protein is Urease accessory protein UreF.